The following is a 548-amino-acid chain: Non-structural protein NS1 (548 aa).

Belongs to the orbivirus non-structural protein NS1 family.

This chain is Non-structural protein NS1 (Segment-5), found in African horse sickness virus (AHSV).